The primary structure comprises 132 residues: Fatty acid-binding protein, adipocyte (132 aa).

The residue at position 2 (C2) is an N-acetylcysteine. S13 is modified (phosphoserine). Y20 is subject to Phosphotyrosine; by Tyr-kinases. Positions 22–32 (KEVGVGFATRK) match the Nuclear localization signal motif. 127–129 (RVY) serves as a coordination point for a fatty acid.

It belongs to the calycin superfamily. Fatty-acid binding protein (FABP) family. As to quaternary structure, monomer. Homodimer. Interacts with PPARG.

The protein localises to the cytoplasm. It is found in the nucleus. Its function is as follows. Lipid transport protein in adipocytes. Binds both long chain fatty acids and retinoic acid. Delivers long-chain fatty acids and retinoic acid to their cognate receptors in the nucleus. FABPs are important elements related to the hibernating state in mammals. In Ictidomys tridecemlineatus (Thirteen-lined ground squirrel), this protein is Fatty acid-binding protein, adipocyte (FABP4).